The following is a 403-amino-acid chain: Probable protein phosphatase 2C 8 (403 aa).

Residues 42–80 are disordered; it reads LGRTASAVAEDDAAKRVRPASDSSSDSSESAKVAPEPTA. A compositionally biased stretch (low complexity) spans 62-71; the sequence is SDSSSDSSES. The region spanning 90-388 is the PPM-type phosphatase domain; the sequence is SHGAVSVIGR…DNISVVVVEL (299 aa). Residues Asp144, Gly145, Asp325, and Asp379 each contribute to the Mn(2+) site.

The protein belongs to the PP2C family. Mg(2+) is required as a cofactor. It depends on Mn(2+) as a cofactor.

The catalysed reaction is O-phospho-L-seryl-[protein] + H2O = L-seryl-[protein] + phosphate. It catalyses the reaction O-phospho-L-threonyl-[protein] + H2O = L-threonyl-[protein] + phosphate. In Oryza sativa subsp. japonica (Rice), this protein is Probable protein phosphatase 2C 8.